The primary structure comprises 186 residues: Elongation factor P (186 aa).

It belongs to the elongation factor P family.

The protein localises to the cytoplasm. It functions in the pathway protein biosynthesis; polypeptide chain elongation. In terms of biological role, involved in peptide bond synthesis. Stimulates efficient translation and peptide-bond synthesis on native or reconstituted 70S ribosomes in vitro. Probably functions indirectly by altering the affinity of the ribosome for aminoacyl-tRNA, thus increasing their reactivity as acceptors for peptidyl transferase. The sequence is that of Elongation factor P from Prochlorococcus marinus (strain MIT 9312).